Consider the following 359-residue polypeptide: Phospho-N-acetylmuramoyl-pentapeptide-transferase (359 aa).

The next 10 membrane-spanning stretches (helical) occupy residues 3 to 23 (QILIAVAVAVTVSILLTPVLI), 55 to 75 (VAILAGIWAGYLGAHLAGLAF), 80 to 100 (IGASGLLVLGLATALGGVGFI), 117 to 137 (TAKTVGQITSAVLFGVLVLQF), 156 to 176 (IATVTLAPVLFVLFCVVIVSA), 187 to 207 (LDGLAAGTMAMVTAAYVLITF), 231 to 251 (LALIAAATAGACIGFLWWNAA), 255 to 275 (IFMGDTGSLALGGVIAGLSVT), 280 to 300 (ILAVVLGALFVAEITSVVLQI), and 334 to 354 (FWLLTAITCGLGVALFYGEWL).

The protein belongs to the glycosyltransferase 4 family. MraY subfamily. Mg(2+) is required as a cofactor.

The protein resides in the cell membrane. The catalysed reaction is UDP-N-acetyl-alpha-D-muramoyl-L-alanyl-gamma-D-glutamyl-meso-2,6-diaminopimeloyl-D-alanyl-D-alanine + di-trans,octa-cis-undecaprenyl phosphate = di-trans,octa-cis-undecaprenyl diphospho-N-acetyl-alpha-D-muramoyl-L-alanyl-D-glutamyl-meso-2,6-diaminopimeloyl-D-alanyl-D-alanine + UMP. Its pathway is cell wall biogenesis; peptidoglycan biosynthesis. In terms of biological role, catalyzes the initial step of the lipid cycle reactions in the biosynthesis of the cell wall peptidoglycan: transfers peptidoglycan precursor phospho-MurNAc-pentapeptide from UDP-MurNAc-pentapeptide onto the lipid carrier undecaprenyl phosphate, yielding undecaprenyl-pyrophosphoryl-MurNAc-pentapeptide, known as lipid I. This Mycobacterium tuberculosis (strain ATCC 25177 / H37Ra) protein is Phospho-N-acetylmuramoyl-pentapeptide-transferase.